The following is a 709-amino-acid chain: Rho guanine nucleotide exchange factor 16 (709 aa).

An N-acetylalanine modification is found at alanine 2. Phosphoserine is present on residues serine 6, serine 41, and serine 107. Residues 22 to 70 (ELRLDAGGNPASGLPMVRGSPRVRDDAAFQPQVPAPPQPRPPGHEEPWP) form a disordered region. The disordered stretch occupies residues 114-146 (SREAARRDPKLLPAPSFSLDDMDVDKDPGGMLR). Serine 174, serine 191, and serine 208 each carry phosphoserine. The tract at residues 180-246 (LAEEPSQPHT…ESSSPEGTQK (67 aa)) is disordered. The span at 191–207 (SPAKNKKTLGRKRGHKG) shows a compositional bias: basic residues. Threonine 226 is subject to Phosphothreonine. Phosphoserine is present on residues serine 227, serine 230, and serine 240. Residues 275–481 (LDQLSTEERK…MERMEQMYTL (207 aa)) are required for RHOG activation and mediates interaction with EPHA2. The 185-residue stretch at 284-468 (KRQEAMFEIL…SKLVRQCNEG (185 aa)) folds into the DH domain. The PH domain occupies 501–620 (WLLKRGELFL…WIVALTHSER (120 aa)). Positions 629 to 689 (GDLPQVEITK…PEDFARFITS (61 aa)) constitute an SH3 domain. A PDZ-binding motif motif is present at residues 707–709 (TDV).

Interacts with ELMO2, EPHA2, RAC1 and RHOG; mediates activation of RAC1 by EPHA2. Interacts with TAX1BP3 (via PDZ domain). May interact with CDC42; stimulated by HPV16 E6.

It is found in the cytoplasm. Its function is as follows. Guanyl-nucleotide exchange factor of the RHOG GTPase stimulating the exchange of RHOG-associated GDP for GTP. May play a role in chemotactic cell migration by mediating the activation of RAC1 by EPHA2. May also activate CDC42 and mediate activation of CDC42 by the viral protein HPV16 E6. This chain is Rho guanine nucleotide exchange factor 16 (ARHGEF16), found in Homo sapiens (Human).